We begin with the raw amino-acid sequence, 324 residues long: uncharacterized protein (324 aa).

Residues 1–11 (MNTNINVNGSN) show a composition bias toward polar residues. Disordered stretches follow at residues 1 to 77 (MNTN…YSYS), 132 to 194 (NNHY…NNNN), and 272 to 324 (DENI…DNDS). Low complexity predominate over residues 21-64 (NENNNNNNGRNNNTNNNNNGRYNNNNNNNNNNNNNNYNLNMNST). Residues 279-324 (SNNNNNNNNNNNNSYNVNICRNNSNFNVNENNGGDNNNDNNNDNDS) show a composition bias toward low complexity.

This is an uncharacterized protein from Dictyostelium discoideum (Social amoeba).